The sequence spans 220 residues: HTH-type transcriptional repressor KstR (220 aa).

The region spanning 36-96 is the HTH tetR-type domain; the sequence is RERRKRILDA…SALGREFSRI (61 aa). Residues 59-78 constitute a DNA-binding region (H-T-H motif); the sequence is QMRAVADRADVAVGTLYRYF.

Homodimer.

Its function is as follows. Controls the expression of genes used for utilizing diverse lipids as energy sources. The chain is HTH-type transcriptional repressor KstR (kstR) from Mycobacterium tuberculosis (strain ATCC 25618 / H37Rv).